Reading from the N-terminus, the 733-residue chain is Catalase-peroxidase (733 aa).

A disordered region spans residues 1-24 (MTDDSTCPVTGGADKQVTGRGQSY). Residues 96–219 (WHSAGTYRTL…LAAVQMGLIY (124 aa)) constitute a cross-link (tryptophyl-tyrosyl-methioninium (Trp-Tyr) (with M-245)). His97 acts as the Proton acceptor in catalysis. The tryptophyl-tyrosyl-methioninium (Tyr-Met) (with W-96) cross-link spans 219-245 (YVNPEGPNGKPDPVAAAKDIRETFARM). His260 lines the heme b pocket.

This sequence belongs to the peroxidase family. Peroxidase/catalase subfamily. Homodimer or homotetramer. It depends on heme b as a cofactor. Post-translationally, formation of the three residue Trp-Tyr-Met cross-link is important for the catalase, but not the peroxidase activity of the enzyme.

The enzyme catalyses H2O2 + AH2 = A + 2 H2O. The catalysed reaction is 2 H2O2 = O2 + 2 H2O. Functionally, bifunctional enzyme with both catalase and broad-spectrum peroxidase activity. The sequence is that of Catalase-peroxidase from Methanoregula boonei (strain DSM 21154 / JCM 14090 / 6A8).